We begin with the raw amino-acid sequence, 377 residues long: Alanine racemase (377 aa).

Residue Lys37 is the Proton acceptor; specific for D-alanine of the active site. Residue Lys37 is modified to N6-(pyridoxal phosphate)lysine. Arg135 lines the substrate pocket. The Proton acceptor; specific for L-alanine role is filled by Tyr271. Substrate is bound at residue Met319.

The protein belongs to the alanine racemase family. It depends on pyridoxal 5'-phosphate as a cofactor.

It catalyses the reaction L-alanine = D-alanine. The protein operates within amino-acid biosynthesis; D-alanine biosynthesis; D-alanine from L-alanine: step 1/1. Catalyzes the interconversion of L-alanine and D-alanine. May also act on other amino acids. This is Alanine racemase (alr) from Helicobacter pylori (strain P12).